The following is a 451-amino-acid chain: Phosphoglucosamine mutase (451 aa).

The active-site Phosphoserine intermediate is the Ser-101. Mg(2+) contacts are provided by Ser-101, Asp-240, Asp-242, and Asp-244. Ser-101 bears the Phosphoserine mark.

Belongs to the phosphohexose mutase family. It depends on Mg(2+) as a cofactor. Activated by phosphorylation.

The catalysed reaction is alpha-D-glucosamine 1-phosphate = D-glucosamine 6-phosphate. Functionally, catalyzes the conversion of glucosamine-6-phosphate to glucosamine-1-phosphate. The polypeptide is Phosphoglucosamine mutase (Streptococcus pyogenes serotype M18 (strain MGAS8232)).